Here is a 127-residue protein sequence, read N- to C-terminus: Large ribosomal subunit protein mL55 (127 aa).

The transit peptide at 1-32 (MPLAILLSLLRHCGVRAALPTPRHLHTSPWRA) directs the protein to the mitochondrion. Ser-84 carries the phosphoserine modification.

Belongs to the mitochondrion-specific ribosomal protein mL55 family. As to quaternary structure, component of the mitochondrial ribosome large subunit (39S) which comprises a 16S rRNA and about 50 distinct proteins.

Its subcellular location is the mitochondrion. The chain is Large ribosomal subunit protein mL55 (Mrpl55) from Mus musculus (Mouse).